We begin with the raw amino-acid sequence, 228 residues long: Urease accessory protein UreF (228 aa).

It belongs to the UreF family. UreD, UreF and UreG form a complex that acts as a GTP-hydrolysis-dependent molecular chaperone, activating the urease apoprotein by helping to assemble the nickel containing metallocenter of UreC. The UreE protein probably delivers the nickel.

Its subcellular location is the cytoplasm. Functionally, required for maturation of urease via the functional incorporation of the urease nickel metallocenter. This chain is Urease accessory protein UreF, found in Yersinia pestis bv. Antiqua (strain Antiqua).